The sequence spans 337 residues: Probable phospholipase A1 magnifin (337 aa).

A signal peptide spans 1-21 (MNLKYLLLFFCLVQVLHYCYS). Residues 22–33 (HGDPSLSNELDR) constitute a propeptide that is removed on maturation. Residues C39 and C123 are joined by a disulfide bond. The Nucleophile role is filled by S173. Residue D201 is the Charge relay system of the active site. Cystine bridges form between C212-C217 and C255-C264. Residue H266 is the Charge relay system of the active site. Disulfide bonds link C281–C305, C282–C330, and C298–C303.

The protein belongs to the AB hydrolase superfamily. Lipase family. In terms of tissue distribution, expressed by the venom gland.

The protein localises to the secreted. It catalyses the reaction a 1,2-diacyl-sn-glycero-3-phosphocholine + H2O = a 2-acyl-sn-glycero-3-phosphocholine + a fatty acid + H(+). Its function is as follows. Catalyzes the hydrolysis of phosphatidylcholine with phospholipase A1 activity. May act as an allergen and induce hemolytic activity. In vivo, induces dose-dependent platelet aggregation (nanomolar concentration) and induces thrombosis. This Vespa magnifica (Hornet) protein is Probable phospholipase A1 magnifin.